Consider the following 233-residue polypeptide: Phosphoribosylformylglycinamidine synthase subunit PurQ (233 aa).

A Glutamine amidotransferase type-1 domain is found at 3 to 233 (SAVLVFPGIN…GLAQHLAKAA (231 aa)). Cys-87 acts as the Nucleophile in catalysis. Catalysis depends on residues His-204 and Glu-206.

As to quaternary structure, part of the FGAM synthase complex composed of 1 PurL, 1 PurQ and 2 PurS subunits.

Its subcellular location is the cytoplasm. It catalyses the reaction N(2)-formyl-N(1)-(5-phospho-beta-D-ribosyl)glycinamide + L-glutamine + ATP + H2O = 2-formamido-N(1)-(5-O-phospho-beta-D-ribosyl)acetamidine + L-glutamate + ADP + phosphate + H(+). It carries out the reaction L-glutamine + H2O = L-glutamate + NH4(+). It functions in the pathway purine metabolism; IMP biosynthesis via de novo pathway; 5-amino-1-(5-phospho-D-ribosyl)imidazole from N(2)-formyl-N(1)-(5-phospho-D-ribosyl)glycinamide: step 1/2. Functionally, part of the phosphoribosylformylglycinamidine synthase complex involved in the purines biosynthetic pathway. Catalyzes the ATP-dependent conversion of formylglycinamide ribonucleotide (FGAR) and glutamine to yield formylglycinamidine ribonucleotide (FGAM) and glutamate. The FGAM synthase complex is composed of three subunits. PurQ produces an ammonia molecule by converting glutamine to glutamate. PurL transfers the ammonia molecule to FGAR to form FGAM in an ATP-dependent manner. PurS interacts with PurQ and PurL and is thought to assist in the transfer of the ammonia molecule from PurQ to PurL. This is Phosphoribosylformylglycinamidine synthase subunit PurQ from Rhodopseudomonas palustris (strain ATCC BAA-98 / CGA009).